Reading from the N-terminus, the 500-residue chain is Probable cytosol aminopeptidase (500 aa).

The Mn(2+) site is built by K268 and D273. Residue K280 is part of the active site. Mn(2+)-binding residues include D291, D350, and E352. The active site involves R354.

It belongs to the peptidase M17 family. It depends on Mn(2+) as a cofactor.

It localises to the cytoplasm. It carries out the reaction Release of an N-terminal amino acid, Xaa-|-Yaa-, in which Xaa is preferably Leu, but may be other amino acids including Pro although not Arg or Lys, and Yaa may be Pro. Amino acid amides and methyl esters are also readily hydrolyzed, but rates on arylamides are exceedingly low.. The catalysed reaction is Release of an N-terminal amino acid, preferentially leucine, but not glutamic or aspartic acids.. Presumably involved in the processing and regular turnover of intracellular proteins. Catalyzes the removal of unsubstituted N-terminal amino acids from various peptides. In Azoarcus sp. (strain BH72), this protein is Probable cytosol aminopeptidase.